Reading from the N-terminus, the 83-residue chain is Aspergillic acid biosynthesis cluster protein F (83 aa).

It participates in secondary metabolite biosynthesis. Part of the gene cluster that mediates the biosynthesis of aspergillic acid, a hydroxamic acid-containing pyrazinone with aliphatic side chains that originates from leucine (Leu) and isoleucine (Ile). Aspergillic acid has antibiotic properties and was shown to be lethal to mice. The first step in the pathway is the production of deoxyaspergillic acid via a condensation between the Ile amine and the Leu carboxylic acid, followed by a reductive release from the protein forming the dipeptide aldehyde NH(2)-Leu-Ile-CHO, which could undergo an intermolecular cyclization resulting in a dihydropyrazinone. As the NRPS asaC lacks a condensation domain, it is improbable that it is responsible for condensation of Leu and Ile. One possibility is that asaC acts on a previously condensed dipeptide and functions as a Leu-Ile reductase to yield deoxyaspergillic acid. After asaC forms deoxyaspergillic acid, the cytochrome P450 asaD oxidizes the pyrazinone to the hydroxamic acid-containing bioactive metabolite aspergillic acid. The hydroxylase/desaturase asaB can then convert aspergillic acid to hydroxyaspergillic acid. Both aspergillic acid and hydroxyaspergillic acid can form complexes with iron producing ferriaspergillin analogs. The sequence is that of Aspergillic acid biosynthesis cluster protein F from Aspergillus flavus (strain ATCC 200026 / FGSC A1120 / IAM 13836 / NRRL 3357 / JCM 12722 / SRRC 167).